Consider the following 370-residue polypeptide: MASETAFQATGAGRIVISVDAMGGDRGPAAVVAGLAESASAIPGAYFIVHGDEVHLGPMIAKRKDLKGRCEIRHAPRVVTMNDKPSQVMRHGEGTSMWSCIESVRAGEATVAVSCGNTGALMAVSMIRLRKLPGVNRPAIACMWPSRNPGGFNVMLDVGADIKADAEDLAQYALMGASYARNGLSLERPRVGLLNVGTEEHKGRAELKVAQDLISANAAAGAYEFVGFIEGGDIPGRRCDVIVTDGFTGNVALKTGEGTAKLISDFLREAFGANILSKMAAILALGSLKRLQKRIDPRRVNGGVFLGLNGTVVKSHGSADGTGVAAAIALAARLAQSGFHERLAARLASAGRAGQDAPDEMAAPGRSEKR.

Residues 349-370 (SAGRAGQDAPDEMAAPGRSEKR) are disordered.

It belongs to the PlsX family. In terms of assembly, homodimer. Probably interacts with PlsY.

The protein resides in the cytoplasm. It carries out the reaction a fatty acyl-[ACP] + phosphate = an acyl phosphate + holo-[ACP]. It functions in the pathway lipid metabolism; phospholipid metabolism. Catalyzes the reversible formation of acyl-phosphate (acyl-PO(4)) from acyl-[acyl-carrier-protein] (acyl-ACP). This enzyme utilizes acyl-ACP as fatty acyl donor, but not acyl-CoA. This is Phosphate acyltransferase from Cereibacter sphaeroides (strain ATCC 17029 / ATH 2.4.9) (Rhodobacter sphaeroides).